Consider the following 255-residue polypeptide: MNTARLNQGTPLLLNAVSKHYAENIVLNQLDLHIPAGQFVAVVGRSGGGKSTLLHLLAGLETPTAGDVLAGTTPLAEIQDDTRMMFQDARLLPWKSVIDNVGLGLKGQWRDAARRALAAVGLENRAGEWPAALSGGQKQRVALARALIHRPGLLLLDEPLGALDALTRLEMQDLIVSLWQQHGFTVLLVTHDVSEAVAMADRVLLIEEGKISLDLTVDIPRPRRLGSVRLAELEAEVLQRVMRRGHSEQLIRRHG.

The ABC transporter domain maps to 12 to 233 (LLLNAVSKHY…RLGSVRLAEL (222 aa)). Residue 44–51 (GRSGGGKS) coordinates ATP.

Belongs to the ABC transporter superfamily. Aliphatic sulfonates importer (TC 3.A.1.17.2) family. As to quaternary structure, the complex is composed of two ATP-binding proteins (SsuB), two transmembrane proteins (SsuC) and a solute-binding protein (SsuA).

It is found in the cell inner membrane. It carries out the reaction ATP + H2O + aliphatic sulfonate-[sulfonate-binding protein]Side 1 = ADP + phosphate + aliphatic sulfonateSide 2 + [sulfonate-binding protein]Side 1.. In terms of biological role, part of the ABC transporter complex SsuABC involved in aliphatic sulfonates import. Responsible for energy coupling to the transport system. This is Aliphatic sulfonates import ATP-binding protein SsuB from Shigella flexneri serotype 5b (strain 8401).